Here is a 468-residue protein sequence, read N- to C-terminus: N-acetyltransferase SLI1 (468 aa).

The protein resides in the endoplasmic reticulum. Functionally, confers resistance to the sphingolipid biosynthesis inhibitor drug myriocin (ISP-1). Inactivates ISP-1 by converting it into N-acetyl-myriocin. Cooperates with YPK1 in mediating resistance to myriocin. This is N-acetyltransferase SLI1 (SLI1) from Saccharomyces cerevisiae (strain ATCC 204508 / S288c) (Baker's yeast).